The sequence spans 303 residues: MIKQRTLKNIIRATGVGLHSGEKVYLTLKPAPVNTGIVFCRADLDPVVQIPARAENVGDTTLSTTLVNGDVKVDTVEHLLSAMAGLGIDNAYVELSASEVPIMDGSAGPFVFLIQSAGLEEQDAPKKFIRILREVTVEEGGKRATFVPFEGFKVSFEIDFDHPVFRDRTQSASVDFSSTSFVKEVSRARTFGFMSDIEYLRKHNLALGGSVENAIVVDKDGVLNEDGLRYEDEFVKHKILDAIGDLYLLGNSLIGEFRGFKSGHALNNRLLRTLIEQKDAWEVVTFEDASTAPISYMRPVAAV.

The Zn(2+) site is built by His-78, His-237, and Asp-241. Catalysis depends on His-264, which acts as the Proton donor.

This sequence belongs to the LpxC family. It depends on Zn(2+) as a cofactor.

The catalysed reaction is a UDP-3-O-[(3R)-3-hydroxyacyl]-N-acetyl-alpha-D-glucosamine + H2O = a UDP-3-O-[(3R)-3-hydroxyacyl]-alpha-D-glucosamine + acetate. The protein operates within glycolipid biosynthesis; lipid IV(A) biosynthesis; lipid IV(A) from (3R)-3-hydroxytetradecanoyl-[acyl-carrier-protein] and UDP-N-acetyl-alpha-D-glucosamine: step 2/6. Its function is as follows. Catalyzes the hydrolysis of UDP-3-O-myristoyl-N-acetylglucosamine to form UDP-3-O-myristoylglucosamine and acetate, the committed step in lipid A biosynthesis. In Pseudomonas savastanoi pv. phaseolicola (strain 1448A / Race 6) (Pseudomonas syringae pv. phaseolicola (strain 1448A / Race 6)), this protein is UDP-3-O-acyl-N-acetylglucosamine deacetylase.